We begin with the raw amino-acid sequence, 221 residues long: Fanconi anemia core complex-associated protein 24 (221 aa).

As to quaternary structure, belongs to the multisubunit FA complex composed of FANCA, FANCB, FANCC, FANCE, FANCF, FANCG, FANCL/PHF9, FANCM and FAAP24. Interacts with FANCM.

Its subcellular location is the nucleus. Its function is as follows. Plays a role in DNA repair through recruitment of the FA core complex to damaged DNA. Regulates FANCD2 monoubiquitination upon DNA damage. Induces chromosomal instability as well as hypersensitivity to DNA cross-linking agents, when repressed. Targets FANCM/FAAP24 complex to the DNA, preferentially to single strand DNA. This chain is Fanconi anemia core complex-associated protein 24, found in Mus musculus (Mouse).